The primary structure comprises 318 residues: MNLKDIAKIINSDFSGEYFEITKMNTLRDATKSEISFVANAKYIKEIQNSNAGAIIVSKDTKEFVPSGCVALVVENPYWEMATLSKYFAPSIEDETLPEPKIGEGTTISPRAEIARGAIIGKGCTIMAHVYIGTNAVIGDNTIIYPSVTVYRDCRVGSECIIHANTTIGSDGFGFATNKQGEHRKIYQNGNVEIEDNVEIGSSTTIDRAVFGTTLIKYGVRIDNLVQVGHNCVIGEHSVLVAQAGISGSTTMGRNVVMGGQSATAGHLSIAPFTTMAARSGVTKSIDKSGLTFAGFPLLEHRLWLKLQAKIARLIKQN.

The active-site Proton acceptor is the H230.

The protein belongs to the transferase hexapeptide repeat family. LpxD subfamily. In terms of assembly, homotrimer.

The catalysed reaction is a UDP-3-O-[(3R)-3-hydroxyacyl]-alpha-D-glucosamine + a (3R)-hydroxyacyl-[ACP] = a UDP-2-N,3-O-bis[(3R)-3-hydroxyacyl]-alpha-D-glucosamine + holo-[ACP] + H(+). It participates in bacterial outer membrane biogenesis; LPS lipid A biosynthesis. In terms of biological role, catalyzes the N-acylation of UDP-3-O-acylglucosamine using 3-hydroxyacyl-ACP as the acyl donor. Is involved in the biosynthesis of lipid A, a phosphorylated glycolipid that anchors the lipopolysaccharide to the outer membrane of the cell. The chain is UDP-3-O-acylglucosamine N-acyltransferase 1 from Sulfurimonas denitrificans (strain ATCC 33889 / DSM 1251) (Thiomicrospira denitrificans (strain ATCC 33889 / DSM 1251)).